The chain runs to 471 residues: 3-isopropylmalate dehydratase large subunit (471 aa).

[4Fe-4S] cluster contacts are provided by cysteine 347, cysteine 407, and cysteine 410.

The protein belongs to the aconitase/IPM isomerase family. LeuC type 1 subfamily. In terms of assembly, heterodimer of LeuC and LeuD. The cofactor is [4Fe-4S] cluster.

It catalyses the reaction (2R,3S)-3-isopropylmalate = (2S)-2-isopropylmalate. It functions in the pathway amino-acid biosynthesis; L-leucine biosynthesis; L-leucine from 3-methyl-2-oxobutanoate: step 2/4. In terms of biological role, catalyzes the isomerization between 2-isopropylmalate and 3-isopropylmalate, via the formation of 2-isopropylmaleate. In Acaryochloris marina (strain MBIC 11017), this protein is 3-isopropylmalate dehydratase large subunit.